The sequence spans 554 residues: CTP synthase (554 aa).

Residues 1–265 (MTPLIFVTGG…DELVIDQFKL (265 aa)) form an amidoligase domain region. Residue Ser-13 coordinates CTP. Ser-13 is a UTP binding site. Residues 14–19 (SLGKGI) and Asp-71 each bind ATP. Positions 71 and 139 each coordinate Mg(2+). Residues 146–148 (DIE), 186–191 (KTKPTQ), and Lys-222 contribute to the CTP site. Residues 186 to 191 (KTKPTQ) and Lys-222 contribute to the UTP site. A Glutamine amidotransferase type-1 domain is found at 292-545 (TIAVVGKYVD…VRAAREKKAG (254 aa)). Gly-353 lines the L-glutamine pocket. Cys-380 serves as the catalytic Nucleophile; for glutamine hydrolysis. Residues 381–384 (YGMQ), Glu-404, and Arg-471 each bind L-glutamine. Catalysis depends on residues His-518 and Glu-520.

The protein belongs to the CTP synthase family. In terms of assembly, homotetramer.

It carries out the reaction UTP + L-glutamine + ATP + H2O = CTP + L-glutamate + ADP + phosphate + 2 H(+). The catalysed reaction is L-glutamine + H2O = L-glutamate + NH4(+). The enzyme catalyses UTP + NH4(+) + ATP = CTP + ADP + phosphate + 2 H(+). It functions in the pathway pyrimidine metabolism; CTP biosynthesis via de novo pathway; CTP from UDP: step 2/2. Its activity is regulated as follows. Allosterically activated by GTP, when glutamine is the substrate; GTP has no effect on the reaction when ammonia is the substrate. The allosteric effector GTP functions by stabilizing the protein conformation that binds the tetrahedral intermediate(s) formed during glutamine hydrolysis. Inhibited by the product CTP, via allosteric rather than competitive inhibition. Catalyzes the ATP-dependent amination of UTP to CTP with either L-glutamine or ammonia as the source of nitrogen. Regulates intracellular CTP levels through interactions with the four ribonucleotide triphosphates. This is CTP synthase from Xanthomonas campestris pv. campestris (strain B100).